The following is a 288-amino-acid chain: tRNA dimethylallyltransferase (288 aa).

17-24 (GPTASGKT) contacts ATP. 19–24 (TASGKT) is a substrate binding site.

This sequence belongs to the IPP transferase family. Monomer. Mg(2+) serves as cofactor.

The enzyme catalyses adenosine(37) in tRNA + dimethylallyl diphosphate = N(6)-dimethylallyladenosine(37) in tRNA + diphosphate. In terms of biological role, catalyzes the transfer of a dimethylallyl group onto the adenine at position 37 in tRNAs that read codons beginning with uridine, leading to the formation of N6-(dimethylallyl)adenosine (i(6)A). The sequence is that of tRNA dimethylallyltransferase from Jannaschia sp. (strain CCS1).